A 443-amino-acid polypeptide reads, in one-letter code: Exodeoxyribonuclease 7 large subunit (443 aa).

Belongs to the XseA family. In terms of assembly, heterooligomer composed of large and small subunits.

It is found in the cytoplasm. The enzyme catalyses Exonucleolytic cleavage in either 5'- to 3'- or 3'- to 5'-direction to yield nucleoside 5'-phosphates.. Its function is as follows. Bidirectionally degrades single-stranded DNA into large acid-insoluble oligonucleotides, which are then degraded further into small acid-soluble oligonucleotides. This chain is Exodeoxyribonuclease 7 large subunit, found in Stenotrophomonas maltophilia (strain R551-3).